Consider the following 377-residue polypeptide: Leukocyte elastase inhibitor (377 aa).

M1 carries the N-acetylmethionine modification. Position 136 is an N6-acetyllysine (K136). Position 298 is a phosphoserine (S298). The segment at 349–377 (EFVADHPFIFFIRHKPSSNILFLGRLSSP) is CARD-binding motif (CBM).

The protein belongs to the serpin family. Ov-serpin subfamily. As to quaternary structure, monomer. Interacts (via C-terminus) with CASP1; CASP4 (via CARD domain) and CASP5; these interactions regulate the activity of inflammatory caspases. Interacts with PRTN3. Interacts with GZMH.

It is found in the secreted. Its subcellular location is the cytoplasm. The protein localises to the cytolytic granule. It localises to the early endosome. Its function is as follows. Neutrophil serine protease inhibitor that plays an essential role in the regulation of the innate immune response, inflammation and cellular homeostasis. Acts primarily to protect the cell from proteases released in the cytoplasm during stress or infection. These proteases are important in killing microbes but when released from granules, these potent enzymes also destroy host proteins and contribute to mortality. Regulates the activity of the neutrophil proteases elastase, cathepsin G, proteinase-3, chymase, chymotrypsin, and kallikrein-3. Also acts as a potent intracellular inhibitor of GZMH by directly blocking its proteolytic activity. During inflammation, limits the activity of inflammatory caspases CASP1, CASP4 and CASP5 by suppressing their caspase-recruitment domain (CARD) oligomerization and enzymatic activation. When secreted, promotes the proliferation of beta-cells via its protease inhibitory function. This Bos taurus (Bovine) protein is Leukocyte elastase inhibitor (SERPINB1).